The following is a 290-amino-acid chain: uncharacterized protein (290 aa).

Residues 7–21 (AVFG…MAQN) and Thr100 contribute to the NAD(+) site. Lys175 is a catalytic residue. Position 243 (Lys243) interacts with NAD(+).

Belongs to the HIBADH-related family.

This is an uncharacterized protein from Synechocystis sp. (strain ATCC 27184 / PCC 6803 / Kazusa).